Consider the following 320-residue polypeptide: Ferrochelatase (320 aa).

Fe cation is bound by residues histidine 194 and glutamate 275.

It belongs to the ferrochelatase family. As to quaternary structure, monomer.

It localises to the cytoplasm. The catalysed reaction is heme b + 2 H(+) = protoporphyrin IX + Fe(2+). It functions in the pathway porphyrin-containing compound metabolism; protoheme biosynthesis; protoheme from protoporphyrin-IX: step 1/1. Functionally, catalyzes the ferrous insertion into protoporphyrin IX. The protein is Ferrochelatase of Salmonella arizonae (strain ATCC BAA-731 / CDC346-86 / RSK2980).